The following is a 215-amino-acid chain: Thymidylate kinase (215 aa).

7–14 (GMEGSGKS) lines the ATP pocket.

Belongs to the thymidylate kinase family.

It catalyses the reaction dTMP + ATP = dTDP + ADP. Phosphorylation of dTMP to form dTDP in both de novo and salvage pathways of dTTP synthesis. This is Thymidylate kinase from Nitratidesulfovibrio vulgaris (strain DSM 19637 / Miyazaki F) (Desulfovibrio vulgaris).